Reading from the N-terminus, the 113-residue chain is U11-theraphotoxin-Hhn1a (113 aa).

The signal sequence occupies residues Met-1 to Ala-21. A propeptide spanning residues Asp-22 to Arg-74 is cleaved from the precursor. Over residues Leu-60–Asn-69 the composition is skewed to basic and acidic residues. The interval Leu-60 to Cys-82 is disordered. 3 cysteine pairs are disulfide-bonded: Cys-75–Cys-90, Cys-82–Cys-95, and Cys-89–Cys-110.

It belongs to the neurotoxin 14 (magi-1) family. 01 (HNTX-16) subfamily. As to expression, expressed by the venom gland.

The protein localises to the secreted. In terms of biological role, probable ion channel inhibitor. The protein is U11-theraphotoxin-Hhn1a of Cyriopagopus hainanus (Chinese bird spider).